The sequence spans 1676 residues: Anucleate primary sterigmata protein A (1676 aa).

The segment covering 1–11 (MEDSQRGNASM) has biased composition (polar residues). Positions 1–35 (MEDSQRGNASMMSMMDDPFVVSPEGARDPPSTNQY) are disordered. Residues 51 to 127 (AQAKRALEAH…EIGQETARAF (77 aa)) are a coiled coil. Disordered stretches follow at residues 160–180 (QATN…NQSN), 353–394 (RLRQ…TPRH), 439–712 (DEVE…SRRP), 1027–1050 (GTST…PVEP), 1176–1201 (PLGA…DQGA), 1220–1270 (VRPL…QASS), and 1297–1354 (PASA…RRSS). A compositionally biased stretch (low complexity) spans 163 to 172 (NSPSKVSVPS). 2 coiled-coil regions span residues 193-359 (TSLL…QQEA) and 408-453 (HAHR…AANG). 5 stretches are compositionally biased toward basic and acidic residues: residues 355–370 (RQQE…RPHD), 439–448 (DEVEQRRRDS), 461–470 (TKAETRKPAR), 479–489 (KKAEVEIHDSD), and 503–522 (ASND…RSDA). Low complexity predominate over residues 593-602 (SYYSTASTSA). Residues 609–620 (DPGTPSISQFST) are compositionally biased toward polar residues. A compositionally biased stretch (basic residues) spans 623–636 (YRLRKKRSVLRKIR). Residues 647 to 664 (SRPSSARESPSTSFTRDT) show a composition bias toward polar residues. Positions 678-687 (AEVDGDEDDF) are enriched in acidic residues. Positions 1032–1042 (TVEFSVSSISS) are enriched in low complexity. Over residues 1191–1201 (SGSSNQADQGA) the composition is skewed to polar residues. Residues 1314–1341 (RASSQQRPRTPNESALQVGSAKTTTSRA) show a composition bias toward polar residues. The PH domain occupies 1393-1504 (QTMIGEFLWK…WFNALSYLLV (112 aa)). Positions 1511-1524 (EEAENGVTLDDIDE) are enriched in acidic residues. 2 disordered regions span residues 1511–1589 (EEAE…QASS) and 1654–1676 (HDVS…HSHH). Composition is skewed to polar residues over residues 1534-1548 (RQTA…QSRG) and 1580-1589 (YSDQARQASS).

The protein localises to the membrane. In terms of biological role, required for nuclear positioning and completion of asexual development. This Emericella nidulans (strain FGSC A4 / ATCC 38163 / CBS 112.46 / NRRL 194 / M139) (Aspergillus nidulans) protein is Anucleate primary sterigmata protein A (apsA).